The primary structure comprises 339 residues: Anthranilate phosphoribosyltransferase (339 aa).

5-phospho-alpha-D-ribose 1-diphosphate-binding positions include glycine 80, 83–84 (GD), threonine 88, 90–93 (NIST), 108–116 (KHGNRAMSS), and serine 120. Anthranilate is bound at residue glycine 80. Serine 92 contacts Mg(2+). Asparagine 111 is an anthranilate binding site. Arginine 166 is a binding site for anthranilate. Aspartate 225 and glutamate 226 together coordinate Mg(2+).

This sequence belongs to the anthranilate phosphoribosyltransferase family. In terms of assembly, homodimer. Mg(2+) serves as cofactor.

It catalyses the reaction N-(5-phospho-beta-D-ribosyl)anthranilate + diphosphate = 5-phospho-alpha-D-ribose 1-diphosphate + anthranilate. It functions in the pathway amino-acid biosynthesis; L-tryptophan biosynthesis; L-tryptophan from chorismate: step 2/5. Catalyzes the transfer of the phosphoribosyl group of 5-phosphorylribose-1-pyrophosphate (PRPP) to anthranilate to yield N-(5'-phosphoribosyl)-anthranilate (PRA). In Chloroflexus aurantiacus (strain ATCC 29366 / DSM 635 / J-10-fl), this protein is Anthranilate phosphoribosyltransferase.